The chain runs to 237 residues: uncharacterized protein (237 aa).

This is an uncharacterized protein from Dictyostelium discoideum (Social amoeba).